The chain runs to 418 residues: Putative ion-transport protein YfeO (418 aa).

A run of 12 helical transmembrane segments spans residues 10 to 30, 54 to 74, 99 to 119, 120 to 140, 149 to 169, 186 to 206, 223 to 243, 258 to 278, 300 to 320, 322 to 342, 343 to 363, and 371 to 391; these read LLLSLPAVAIGIASSLILIVV, DSPFWIIAILTLTGIAVGLVI, ALLGLIVALILGLAGGVSLGP, EHPIMTVNIALAVAIGARLLP, ILASAGTIGALFGTPVAAALI, LFAPLMAAAAGALTTGLFFHP, ILSGAIVAAIAIAAGMVAVWC, VLVLGIGGFILGILGVMGGPV, DYFLLAVIKLAALVVAAASGF, GGRIFPAVFVGVALGLMLHEH, VPAVPAAITVSCAILGIVLVV, and LFMAAVVVPNTTLLPLLCIVM.

It belongs to the chloride channel (TC 2.A.49) family.

It localises to the cell membrane. The polypeptide is Putative ion-transport protein YfeO (Escherichia coli O17:K52:H18 (strain UMN026 / ExPEC)).